We begin with the raw amino-acid sequence, 375 residues long: 23S rRNA (uracil(747)-C(5))-methyltransferase RlmC (375 aa).

4 residues coordinate [4Fe-4S] cluster: Cys3, Cys11, Cys14, and Cys87. S-adenosyl-L-methionine-binding residues include Gln212, Phe241, Glu262, and Asn307. Catalysis depends on Cys334, which acts as the Nucleophile.

The protein belongs to the class I-like SAM-binding methyltransferase superfamily. RNA M5U methyltransferase family. RlmC subfamily.

It carries out the reaction uridine(747) in 23S rRNA + S-adenosyl-L-methionine = 5-methyluridine(747) in 23S rRNA + S-adenosyl-L-homocysteine + H(+). In terms of biological role, catalyzes the formation of 5-methyl-uridine at position 747 (m5U747) in 23S rRNA. The protein is 23S rRNA (uracil(747)-C(5))-methyltransferase RlmC of Shigella flexneri serotype 5b (strain 8401).